The primary structure comprises 126 residues: Holo-[acyl-carrier-protein] synthase (126 aa).

Mg(2+) contacts are provided by aspartate 9 and glutamate 59.

Belongs to the P-Pant transferase superfamily. AcpS family. Mg(2+) serves as cofactor.

It is found in the cytoplasm. The catalysed reaction is apo-[ACP] + CoA = holo-[ACP] + adenosine 3',5'-bisphosphate + H(+). Functionally, transfers the 4'-phosphopantetheine moiety from coenzyme A to a Ser of acyl-carrier-protein. The polypeptide is Holo-[acyl-carrier-protein] synthase (Myxococcus xanthus (strain DK1622)).